The primary structure comprises 423 residues: Kynureninase (423 aa).

Pyridoxal 5'-phosphate contacts are provided by residues L105, S106, 133-136 (FPSD), D218, H221, and Y243. The residue at position 244 (K244) is an N6-(pyridoxal phosphate)lysine. The pyridoxal 5'-phosphate site is built by W273 and N301.

This sequence belongs to the kynureninase family. In terms of assembly, homodimer. The cofactor is pyridoxal 5'-phosphate.

The enzyme catalyses L-kynurenine + H2O = anthranilate + L-alanine + H(+). It catalyses the reaction 3-hydroxy-L-kynurenine + H2O = 3-hydroxyanthranilate + L-alanine + H(+). It functions in the pathway amino-acid degradation; L-kynurenine degradation; L-alanine and anthranilate from L-kynurenine: step 1/1. Its pathway is cofactor biosynthesis; NAD(+) biosynthesis; quinolinate from L-kynurenine: step 2/3. Functionally, catalyzes the cleavage of L-kynurenine (L-Kyn) and L-3-hydroxykynurenine (L-3OHKyn) into anthranilic acid (AA) and 3-hydroxyanthranilic acid (3-OHAA), respectively. The sequence is that of Kynureninase from Xanthomonas oryzae pv. oryzae (strain PXO99A).